Consider the following 473-residue polypeptide: 3-isopropylmalate dehydratase large subunit (473 aa).

[4Fe-4S] cluster contacts are provided by C354, C414, and C417.

The protein belongs to the aconitase/IPM isomerase family. LeuC type 1 subfamily. In terms of assembly, heterodimer of LeuC and LeuD. [4Fe-4S] cluster is required as a cofactor.

The enzyme catalyses (2R,3S)-3-isopropylmalate = (2S)-2-isopropylmalate. It participates in amino-acid biosynthesis; L-leucine biosynthesis; L-leucine from 3-methyl-2-oxobutanoate: step 2/4. Functionally, catalyzes the isomerization between 2-isopropylmalate and 3-isopropylmalate, via the formation of 2-isopropylmaleate. In Mycobacterium bovis (strain ATCC BAA-935 / AF2122/97), this protein is 3-isopropylmalate dehydratase large subunit.